Here is a 1331-residue protein sequence, read N- to C-terminus: Beta-mannanase/endoglucanase A (1331 aa).

The N-terminal stretch at Met1–Ser41 is a signal peptide. Residues Asn42 to Ser325 form a catalytic (mannanase) region. Glu162 (proton donor) is an active-site residue. The active-site Nucleophile is the Glu257. 3 disordered regions span residues Asn319 to Thr363, Pro515 to Thr566, and Glu717 to Thr780. Over residues Thr323–Pro335 the composition is skewed to low complexity. Residues Thr363–Ser516 form the CBM3 1 domain. Composition is skewed to pro residues over residues Ala521–Thr541 and Thr551–Val561. The CBM3 2 domain occupies Thr566–Ser719. Over residues Thr721–Pro735 the composition is skewed to low complexity. Pro residues-rich tracts occupy residues Thr736 to Thr756 and Thr766 to Thr780. Residues Ile781–Val1331 form a catalytic (endoglucanase) region.

The protein in the N-terminal section; belongs to the glycosyl hydrolase 5 (cellulase A) family. It in the C-terminal section; belongs to the glycosyl hydrolase 44 (cellulase J) family.

It catalyses the reaction Random hydrolysis of (1-&gt;4)-beta-D-mannosidic linkages in mannans, galactomannans and glucomannans.. The catalysed reaction is Endohydrolysis of (1-&gt;4)-beta-D-glucosidic linkages in cellulose, lichenin and cereal beta-D-glucans.. Its function is as follows. Degradation of hemicelluloses, the second most abundant polysaccharides in nature. Contains two catalytic domains with mannanase and endoglucanase activities. In Caldicellulosiruptor saccharolyticus (Caldocellum saccharolyticum), this protein is Beta-mannanase/endoglucanase A (manA).